We begin with the raw amino-acid sequence, 639 residues long: Far upstream element-binding protein 1 (639 aa).

Disordered stretches follow at residues 1 to 27 (MADY…NDAF) and 40 to 88 (KIGG…LPPM). Ala2 bears the N-acetylalanine mark. Gly residues predominate over residues 14–23 (SAGGGGGGGV). A phosphoserine mark is found at Ser48 and Ser51. Over residues 61–73 (RPLEDGDQPDAKK) the composition is skewed to basic and acidic residues. KH domains follow at residues 95 to 159 (VMTE…KRLL), 180 to 246 (NAVQ…KEMV), and 270 to 334 (NEGI…AEII). Position 135 is a phosphoserine (Ser135). A Phosphothreonine modification is found at Thr148. 4 positions are modified to omega-N-methylarginine: Arg316, Arg354, Arg356, and Arg358. The interval 341–360 (VQAGNPGGPGPGGRGRGRGQ) is disordered. Over residues 345 to 360 (NPGGPGPGGRGRGRGQ) the composition is skewed to gly residues. A KH 4 domain is found at 371-438 (LQEFNFIVPT…QQIDYARQLI (68 aa)). Thr427 carries the phosphothreonine modification. 2 disordered regions span residues 442–527 (IGGP…GTDP) and 543–574 (QAQP…PAGQ). Over residues 463-500 (PHGPPGPPGPGTPMGPYNPAPYNPGPPGPAPHGPPAPY) the composition is skewed to pro residues. The span at 551–568 (PAGAPTTTQTNGQGDQQN) shows a compositional bias: low complexity. A Phosphoserine modification is found at Ser625.

As to quaternary structure, found in a complex with PUF60 and far upstream element (FUSE) DNA segment. Interacts with PUF60 and JTV1. In terms of processing, ubiquitinated. This targets the protein for proteasome-mediated degradation.

The protein localises to the nucleus. Regulates MYC expression by binding to a single-stranded far-upstream element (FUSE) upstream of the MYC promoter. May act both as activator and repressor of transcription. This is Far upstream element-binding protein 1 from Rattus norvegicus (Rat).